Reading from the N-terminus, the 159-residue chain is MNIRRKNRLWIACAVLAGLALTIGLVLYALRSNIDLFYTPGEILYGKRETQQMPEVGQRLRVGGMVMLGSVQRDPNSLKVTFTIYDAEGSVDVSYEGILPDLFREGQGVVVQGELEKGNHILAKEVLAKHDENYTPPEVEKAMEANHRRPASVYKDPAS.

The Cytoplasmic segment spans residues 1–8 (MNIRRKNR). A helical; Signal-anchor for type II membrane protein membrane pass occupies residues 9-29 (LWIACAVLAGLALTIGLVLYA). The Periplasmic portion of the chain corresponds to 30-159 (LRSNIDLFYT…PASVYKDPAS (130 aa)). Heme is bound by residues H130 and Y134. Basic and acidic residues predominate over residues 132–147 (ENYTPPEVEKAMEANH). Positions 132 to 159 (ENYTPPEVEKAMEANHRRPASVYKDPAS) are disordered.

It belongs to the CcmE/CycJ family.

Its subcellular location is the cell inner membrane. Its function is as follows. Heme chaperone required for the biogenesis of c-type cytochromes. Transiently binds heme delivered by CcmC and transfers the heme to apo-cytochromes in a process facilitated by CcmF and CcmH. This Shigella sonnei (strain Ss046) protein is Cytochrome c-type biogenesis protein CcmE.